A 417-amino-acid polypeptide reads, in one-letter code: Lipoyl synthase, mitochondrial (417 aa).

The disordered stretch occupies residues 35 to 56 (EANPTDLAGLKRKAKRRPTKLA). The segment covering 44-53 (LKRKAKRRPT) has biased composition (basic residues). [4Fe-4S] cluster contacts are provided by Cys-122, Cys-127, Cys-133, Cys-152, Cys-156, Cys-159, and Ser-367. A Radical SAM core domain is found at 137 to 356 (KKSEATATIM…RDKALEMGFL (220 aa)). The interval 389–417 (IEEQQHDKENNNLLLSKEDEKTTQEKANF) is disordered. Positions 391–417 (EQQHDKENNNLLLSKEDEKTTQEKANF) are enriched in basic and acidic residues.

This sequence belongs to the radical SAM superfamily. Lipoyl synthase family. [4Fe-4S] cluster is required as a cofactor.

The protein localises to the mitochondrion. The enzyme catalyses [[Fe-S] cluster scaffold protein carrying a second [4Fe-4S](2+) cluster] + N(6)-octanoyl-L-lysyl-[protein] + 2 oxidized [2Fe-2S]-[ferredoxin] + 2 S-adenosyl-L-methionine + 4 H(+) = [[Fe-S] cluster scaffold protein] + N(6)-[(R)-dihydrolipoyl]-L-lysyl-[protein] + 4 Fe(3+) + 2 hydrogen sulfide + 2 5'-deoxyadenosine + 2 L-methionine + 2 reduced [2Fe-2S]-[ferredoxin]. It participates in protein modification; protein lipoylation via endogenous pathway; protein N(6)-(lipoyl)lysine from octanoyl-[acyl-carrier-protein]: step 2/2. In terms of biological role, catalyzes the radical-mediated insertion of two sulfur atoms into the C-6 and C-8 positions of the octanoyl moiety bound to the lipoyl domains of lipoate-dependent enzymes, thereby converting the octanoylated domains into lipoylated derivatives. The polypeptide is Lipoyl synthase, mitochondrial (Komagataella phaffii (strain GS115 / ATCC 20864) (Yeast)).